The sequence spans 347 residues: Holliday junction branch migration complex subunit RuvB (347 aa).

Positions 1-181 (MTRNSLLNPE…FGIPVRLQFY (181 aa)) are large ATPase domain (RuvB-L). The ATP site is built by Leu20, Arg21, Gly62, Lys65, Thr66, Thr67, Arg171, Tyr181, and Arg218. Residue Thr66 coordinates Mg(2+). The tract at residues 182 to 252 (SIEELRQVIT…IADEALNRLE (71 aa)) is small ATPAse domain (RuvB-S). A head domain (RuvB-H) region spans residues 255–347 (KLGLDLMDRR…SEIKNQPGLL (93 aa)). 3 residues coordinate DNA: Arg291, Arg310, and Arg315.

The protein belongs to the RuvB family. As to quaternary structure, homohexamer. Forms an RuvA(8)-RuvB(12)-Holliday junction (HJ) complex. HJ DNA is sandwiched between 2 RuvA tetramers; dsDNA enters through RuvA and exits via RuvB. An RuvB hexamer assembles on each DNA strand where it exits the tetramer. Each RuvB hexamer is contacted by two RuvA subunits (via domain III) on 2 adjacent RuvB subunits; this complex drives branch migration. In the full resolvosome a probable DNA-RuvA(4)-RuvB(12)-RuvC(2) complex forms which resolves the HJ.

The protein localises to the cytoplasm. The enzyme catalyses ATP + H2O = ADP + phosphate + H(+). Its function is as follows. The RuvA-RuvB-RuvC complex processes Holliday junction (HJ) DNA during genetic recombination and DNA repair, while the RuvA-RuvB complex plays an important role in the rescue of blocked DNA replication forks via replication fork reversal (RFR). RuvA specifically binds to HJ cruciform DNA, conferring on it an open structure. The RuvB hexamer acts as an ATP-dependent pump, pulling dsDNA into and through the RuvAB complex. RuvB forms 2 homohexamers on either side of HJ DNA bound by 1 or 2 RuvA tetramers; 4 subunits per hexamer contact DNA at a time. Coordinated motions by a converter formed by DNA-disengaged RuvB subunits stimulates ATP hydrolysis and nucleotide exchange. Immobilization of the converter enables RuvB to convert the ATP-contained energy into a lever motion, pulling 2 nucleotides of DNA out of the RuvA tetramer per ATP hydrolyzed, thus driving DNA branch migration. The RuvB motors rotate together with the DNA substrate, which together with the progressing nucleotide cycle form the mechanistic basis for DNA recombination by continuous HJ branch migration. Branch migration allows RuvC to scan DNA until it finds its consensus sequence, where it cleaves and resolves cruciform DNA. In Zymomonas mobilis subsp. mobilis (strain ATCC 31821 / ZM4 / CP4), this protein is Holliday junction branch migration complex subunit RuvB.